The sequence spans 180 residues: Putative adenylate kinase (180 aa).

5 residues coordinate ATP: Gly10, Gly12, Lys13, Thr14, and Thr15. The tract at residues Asn30–Val50 is NMP. The tract at residues Glu99–Glu109 is LID. 2 residues coordinate ATP: Arg100 and Lys138.

Belongs to the adenylate kinase family. AK6 subfamily. Interacts with uS11. Not a structural component of 40S pre-ribosomes, but transiently interacts with them by binding to uS11.

It catalyses the reaction AMP + ATP = 2 ADP. The enzyme catalyses ATP + H2O = ADP + phosphate + H(+). Broad-specificity nucleoside monophosphate (NMP) kinase that catalyzes the reversible transfer of the terminal phosphate group between nucleoside triphosphates and monophosphates. Also has ATPase activity. Involved in the late maturation steps of the 30S ribosomal particles, specifically 16S rRNA maturation. While NMP activity is not required for ribosome maturation, ATPase activity is. Associates transiently with small ribosomal subunit protein uS11. ATP hydrolysis breaks the interaction with uS11. May temporarily remove uS11 from the ribosome to enable a conformational change of the ribosomal RNA that is needed for the final maturation step of the small ribosomal subunit. This is Putative adenylate kinase from Pyrococcus abyssi (strain GE5 / Orsay).